We begin with the raw amino-acid sequence, 237 residues long: Protein GrpE (237 aa).

Residues Met1–Thr65 form a disordered region. Positions Val55–Thr65 are enriched in basic and acidic residues.

Belongs to the GrpE family. Homodimer.

It is found in the cytoplasm. Functionally, participates actively in the response to hyperosmotic and heat shock by preventing the aggregation of stress-denatured proteins, in association with DnaK and GrpE. It is the nucleotide exchange factor for DnaK and may function as a thermosensor. Unfolded proteins bind initially to DnaJ; upon interaction with the DnaJ-bound protein, DnaK hydrolyzes its bound ATP, resulting in the formation of a stable complex. GrpE releases ADP from DnaK; ATP binding to DnaK triggers the release of the substrate protein, thus completing the reaction cycle. Several rounds of ATP-dependent interactions between DnaJ, DnaK and GrpE are required for fully efficient folding. In Corynebacterium efficiens (strain DSM 44549 / YS-314 / AJ 12310 / JCM 11189 / NBRC 100395), this protein is Protein GrpE.